The sequence spans 371 residues: Queuine tRNA-ribosyltransferase (371 aa).

Asp-90 acts as the Proton acceptor in catalysis. Substrate-binding positions include 90 to 94 (DSGGF), Asp-144, Gln-189, and Gly-215. Residues 246–252 (GVGTPEN) are RNA binding. Asp-265 functions as the Nucleophile in the catalytic mechanism. The interval 270–274 (TRNAR) is RNA binding; important for wobble base 34 recognition. 4 residues coordinate Zn(2+): Cys-303, Cys-305, Cys-308, and His-334.

The protein belongs to the queuine tRNA-ribosyltransferase family. Homodimer. Within each dimer, one monomer is responsible for RNA recognition and catalysis, while the other monomer binds to the replacement base PreQ1. Zn(2+) serves as cofactor.

The enzyme catalyses 7-aminomethyl-7-carbaguanine + guanosine(34) in tRNA = 7-aminomethyl-7-carbaguanosine(34) in tRNA + guanine. Its pathway is tRNA modification; tRNA-queuosine biosynthesis. Catalyzes the base-exchange of a guanine (G) residue with the queuine precursor 7-aminomethyl-7-deazaguanine (PreQ1) at position 34 (anticodon wobble position) in tRNAs with GU(N) anticodons (tRNA-Asp, -Asn, -His and -Tyr). Catalysis occurs through a double-displacement mechanism. The nucleophile active site attacks the C1' of nucleotide 34 to detach the guanine base from the RNA, forming a covalent enzyme-RNA intermediate. The proton acceptor active site deprotonates the incoming PreQ1, allowing a nucleophilic attack on the C1' of the ribose to form the product. After dissociation, two additional enzymatic reactions on the tRNA convert PreQ1 to queuine (Q), resulting in the hypermodified nucleoside queuosine (7-(((4,5-cis-dihydroxy-2-cyclopenten-1-yl)amino)methyl)-7-deazaguanosine). In Helicobacter pylori (strain Shi470), this protein is Queuine tRNA-ribosyltransferase.